Here is a 155-residue protein sequence, read N- to C-terminus: MKTYSAKPSEIEKKWWVIDAKNVVLGRLASRVANMLRGKHKPSFTPHMDCGDNIIIINAEHVTLTGKKANPKDGKIYYRHTGFPGGIKDTTAGKILSGKHPERVIKMAVKRMITRNALGAKQMSNLYIYANSEHPHAGQQPVVYDFASQNPKNKK.

This sequence belongs to the universal ribosomal protein uL13 family. As to quaternary structure, part of the 50S ribosomal subunit.

Functionally, this protein is one of the early assembly proteins of the 50S ribosomal subunit, although it is not seen to bind rRNA by itself. It is important during the early stages of 50S assembly. The polypeptide is Large ribosomal subunit protein uL13 (Rickettsia bellii (strain OSU 85-389)).